The chain runs to 590 residues: Acetolactate synthase large subunit (590 aa).

Glu61 contributes to the thiamine diphosphate binding site. FAD contacts are provided by residues Arg163, 271–292 (HGTA…LGAR), and 314–333 (DIDP…IVGD). Positions 405–484 (QHQMWSAQFL…VKIIIINNRW (80 aa)) are thiamine pyrophosphate binding. Residues Asp455 and Asn482 each contribute to the Mg(2+) site.

It belongs to the TPP enzyme family. As to quaternary structure, dimer of large and small chains. Mg(2+) is required as a cofactor. Requires thiamine diphosphate as cofactor.

It localises to the plastid. Its subcellular location is the chloroplast. The enzyme catalyses 2 pyruvate + H(+) = (2S)-2-acetolactate + CO2. It participates in amino-acid biosynthesis; L-isoleucine biosynthesis; L-isoleucine from 2-oxobutanoate: step 1/4. Its pathway is amino-acid biosynthesis; L-valine biosynthesis; L-valine from pyruvate: step 1/4. The protein is Acetolactate synthase large subunit (ilvB) of Pyropia yezoensis (Susabi-nori).